The sequence spans 377 residues: Nucleoprotein (377 aa).

2 disordered regions span residues 1-29 (MATQ…RKNN) and 121-236 (MNKP…WKKT). Over residues 17-26 (RRGRSNSRGR) the composition is skewed to basic residues. Positions 31-153 (IPLSFYNPIT…KIPPQFQLEV (123 aa)) constitute a CoV N NTD domain. The RNA-binding stretch occupies residues 33–159 (LSFYNPITLE…QLEVNRSRNN (127 aa)). The segment covering 123–136 (KPTTLGTRGTNNES) has biased composition (polar residues). S156 carries the post-translational modification Phosphoserine; by host. A compositionally biased stretch (low complexity) spans 156–173 (SRNNSRSGSQSRSVSRNR). A compositionally biased stretch (basic and acidic residues) spans 201 to 224 (GVTDKQRSRSKPRERSDSKPRDTT). The CoV N CTD domain occupies 220-333 (PRDTTPKNAN…AYKRPSEVAK (114 aa)). Residues 227-330 (NANKHTWKKT…QIDAYKRPSE (104 aa)) form a dimerization region. Residues S250 and S252 each carry the phosphoserine; by host modification. Positions 327 to 351 (RPSEVAKDQRQRRSRSKSADKKPEE) are disordered.

Belongs to the alphacoronavirus nucleocapsid protein family. Homooligomer. Both monomeric and oligomeric forms interact with RNA. Interacts with protein M. Interacts with NSP3; this interaction serves to tether the genome to the newly translated replicase-transcriptase complex at a very early stage of infection. In terms of processing, ADP-ribosylated. The ADP-ribosylation is retained in the virion during infection. Phosphorylated on serine and threonine residues.

It is found in the virion. The protein localises to the host endoplasmic reticulum-Golgi intermediate compartment. Its subcellular location is the host Golgi apparatus. Its function is as follows. Packages the positive strand viral genome RNA into a helical ribonucleocapsid (RNP) and plays a fundamental role during virion assembly through its interactions with the viral genome and membrane protein M. Plays an important role in enhancing the efficiency of subgenomic viral RNA transcription as well as viral replication. This Feline coronavirus (strain FIPV WSU-79/1146) (FCoV) protein is Nucleoprotein.